The primary structure comprises 70 residues: MFLIYLFVQTAESSWLSKTAKKLENSAKKRISEGIAIAIQGGPRRRRFVAEQDAIHSRVSREVPTLSDSV.

Residues Met-1–Ser-13 form the signal peptide. The propeptide at Arg-45 to Val-70 is removed in mature form.

In terms of tissue distribution, expressed in the body wall, intestine, uterus and ovary.

It localises to the secreted. Has antibacterial activity against several Gram-positive and Gram-negative bacteria. Is weakly active against yeasts. Acts by a nonpore mechanism. The protein is Cecropin-P1 (ASCEC-1) of Ascaris suum (Pig roundworm).